Consider the following 490-residue polypeptide: Glutathione hydrolase 6 (490 aa).

Residues methionine 1–proline 52 lie on the Cytoplasmic side of the membrane. The chain crosses the membrane as a helical; Signal-anchor for type II membrane protein span at residues glycine 53 to valine 73. Residues arginine 74–phenylalanine 490 lie on the Extracellular side of the membrane. 3 N-linked (GlcNAc...) asparagine glycosylation sites follow: asparagine 160, asparagine 165, and asparagine 374.

The protein belongs to the gamma-glutamyltransferase family. Heterodimer composed of the light and heavy chains. The active site is located in the light chain. In terms of processing, cleaved by autocatalysis into a large and a small subunit and the autocatalytic cleavage is essential to the functional activation of the enzyme.

Its subcellular location is the membrane. It carries out the reaction an N-terminal (5-L-glutamyl)-[peptide] + an alpha-amino acid = 5-L-glutamyl amino acid + an N-terminal L-alpha-aminoacyl-[peptide]. The catalysed reaction is glutathione + H2O = L-cysteinylglycine + L-glutamate. The enzyme catalyses an S-substituted glutathione + H2O = an S-substituted L-cysteinylglycine + L-glutamate. The protein operates within sulfur metabolism; glutathione metabolism. In terms of biological role, hydrolyzes and transfers gamma-glutamyl moieties from glutathione and other gamma-glutamyl compounds to acceptors. This Bos taurus (Bovine) protein is Glutathione hydrolase 6.